The following is a 555-amino-acid chain: Efflux pump FUS6 (555 aa).

The interval 1 to 23 (MASAKDAQPAPEKSLSSDPQPEP) is disordered. The next 5 helical transmembrane spans lie at 31-51 (WLIF…TSII), 67-87 (LYVW…PIFA), 97-117 (SLTL…GGAH), 130-150 (GIGG…MVSI), and 159-179 (IIGG…GAFA). An N-linked (GlcNAc...) asparagine glycan is attached at N181. 3 consecutive transmembrane segments (helical) span residues 186 to 206 (WIFY…GLFL), 225 to 245 (WGGS…LSWG), and 253 to 273 (GWQT…FFAY). The N-linked (GlcNAc...) asparagine glycan is linked to N291. The next 6 helical transmembrane spans lie at 297–317 (LLVI…FLPV), 332–352 (VMLF…GITI), 360–380 (VWHF…TLLD), 393–413 (ILFG…ILAS), 425–445 (AWTF…AAVF), and 501–521 (KVVW…CFFV). N-linked (GlcNAc...) asparagine glycosylation occurs at N545.

This sequence belongs to the major facilitator superfamily. TCR/Tet family.

The protein resides in the membrane. In terms of biological role, efflux pump; part of the gene cluster that mediates the biosynthesis of the mycotoxin fusarin C. Within the cluster, FUS1, FUS2, FUS8 and FUS9 are sufficient for fusarin production. The other FUS cluster members are not essential for fusarin C biosynthesis. The chain is Efflux pump FUS6 from Gibberella fujikuroi (strain CBS 195.34 / IMI 58289 / NRRL A-6831) (Bakanae and foot rot disease fungus).